Here is a 122-residue protein sequence, read N- to C-terminus: NADH-quinone oxidoreductase subunit A (122 aa).

3 helical membrane passes run 10–30, 66–86, and 91–111; these read MIVLIFLLLGILLPVVALTLG, IFALLFVIFDVETLFLYPWAV, and LGLFALIEMLIFVVMLLVGLA.

This sequence belongs to the complex I subunit 3 family. NDH-1 is composed of 14 different subunits. Subunits NuoA, H, J, K, L, M, N constitute the membrane sector of the complex.

The protein resides in the cell membrane. The enzyme catalyses a quinone + NADH + 5 H(+)(in) = a quinol + NAD(+) + 4 H(+)(out). Functionally, NDH-1 shuttles electrons from NADH, via FMN and iron-sulfur (Fe-S) centers, to quinones in the respiratory chain. The immediate electron acceptor for the enzyme in this species is believed to be a menaquinone. Couples the redox reaction to proton translocation (for every two electrons transferred, four hydrogen ions are translocated across the cytoplasmic membrane), and thus conserves the redox energy in a proton gradient. This is NADH-quinone oxidoreductase subunit A from Bacillus mycoides (strain KBAB4) (Bacillus weihenstephanensis).